Here is a 526-residue protein sequence, read N- to C-terminus: Acid-sensing ion channel 1 (526 aa).

At 1–49 the chain is on the cytoplasmic side; that stretch reads MELKTEEEEVGGVQPVSIQAFASSSTLHGLAHIFSYERLSLKRALWALC. Residues 50–66 form a helical membrane-spanning segment; it reads FLGSLAVLLCVCTERVQ. The Extracellular portion of the chain corresponds to 67–425; that stretch reads YYFCYHHVTK…ETIEQKKAYE (359 aa). Disulfide bonds link cysteine 93–cysteine 194, cysteine 172–cysteine 179, cysteine 290–cysteine 365, cysteine 308–cysteine 361, cysteine 312–cysteine 359, cysteine 321–cysteine 343, and cysteine 323–cysteine 335. N-linked (GlcNAc...) asparagine glycosylation is found at asparagine 366 and asparagine 393. The chain crosses the membrane as a discontinuously helical span at residues 426–456; the sequence is IAGLLGDIGGQMGLFIGASILTVLELFDYAY. The GAS motif; ion selectivity filter motif lies at 442-444; sequence GAS. At 457-526 the chain is on the cytoplasmic side; that stretch reads EVIKHRLCRR…ARGTFEDFTC (70 aa). Serine 477 is subject to Phosphoserine; by PKA. A Phosphoserine modification is found at serine 497.

The protein belongs to the amiloride-sensitive sodium channel (TC 1.A.6) family. ASIC1 subfamily. As to quaternary structure, homotrimer. Heterotrimer; with other ASIC proteins producing channel with different properties. Interacts with PICK1; regulates ASIC1 clustering in membranes. Interacts with STOM; alters heterotrimeric ASIC channels activity. PH-gating could be regulated by serine proteases. In terms of processing, phosphorylation by PKA regulates interaction with PICK1 and subcellular localization. Phosphorylation by PKC may regulate the channel. Expressed in brain areas receiving strong excitatory corticofugal input. In hippocampus, expressed in the hilus of the dentate gyrus. In the cerebral cortex expressed in anterior and posterior cingulate cortex, sensory and motor cortices. In the sensory cortex strongest expression is detected in the whisker barrel field. In sensorimotor and cingulate cortex expression is elevated in layer III. Also expressed in basal ganglia, striatum, ventral pallidum, olfactory tubercle, and nucleus accumbens. Weakly expressed in thalamus with the exception of the habenula and the medial septal nuclei. In olfactory bulb, preferentially expressed in the glomerular layer, within glomeruli. Expressed in cerebellum in the molecular and granule cell layers. Strongly expressed in amygdala complex, particularly in the lateral and basolateral nuclei. Isoform 1 is more abundant in brain compared to isoform 2 (at protein level). Expressed in the nodose ganglion and dorsal root ganglion. Expressed in dendritic spine cells.

Its subcellular location is the cell membrane. The protein resides in the postsynaptic cell membrane. It localises to the cell projection. The protein localises to the dendrite. The catalysed reaction is Na(+)(in) = Na(+)(out). It carries out the reaction Ca(2+)(in) = Ca(2+)(out). The enzyme catalyses K(+)(in) = K(+)(out). It catalyses the reaction Li(+)(in) = Li(+)(out). Its activity is regulated as follows. Inhibited by the diuretic drug amiloride. With respect to regulation, the activity of the channel is sensitive to rapid decrease in osmotic pressure. Forms voltage-independent, pH-gated trimeric sodium channels that act as postsynaptic excitatory receptors in the nervous system, playing a crucial role in regulating synaptic plasticity, learning, and memory. Upon extracellular pH drop this channel elicits transient, fast activating, and completely desensitizing inward currents. Displays high selectivity for sodium ions but can also permit the permeation of other cations. Regulates more or less directly intracellular calcium concentration and CaMKII phosphorylation, and thereby the density of dendritic spines. Modulates neuronal activity in the circuits underlying innate fear. Functionally, has high selectivity for sodium ions but is also potentially permeable to other cations including potassium. Could function in cochlear mechanoelectrical transduction. The sequence is that of Acid-sensing ion channel 1 from Mus musculus (Mouse).